The sequence spans 427 residues: Glutamate-1-semialdehyde 2,1-aminomutase (427 aa).

Lys268 bears the N6-(pyridoxal phosphate)lysine mark.

This sequence belongs to the class-III pyridoxal-phosphate-dependent aminotransferase family. HemL subfamily. Pyridoxal 5'-phosphate serves as cofactor.

The protein localises to the cytoplasm. It carries out the reaction (S)-4-amino-5-oxopentanoate = 5-aminolevulinate. Its pathway is porphyrin-containing compound metabolism; protoporphyrin-IX biosynthesis; 5-aminolevulinate from L-glutamyl-tRNA(Glu): step 2/2. This is Glutamate-1-semialdehyde 2,1-aminomutase from Methanococcus vannielii (strain ATCC 35089 / DSM 1224 / JCM 13029 / OCM 148 / SB).